An 89-amino-acid polypeptide reads, in one-letter code: Phosphocarrier protein HPr (89 aa).

One can recognise an HPr domain in the interval 1–88 (MLEHELTVTN…ELFENRFNED (88 aa)). The active-site Pros-phosphohistidine intermediate is His15. At Ser46 the chain carries Phosphoserine; by HPrK/P.

This sequence belongs to the HPr family.

It localises to the cytoplasm. With respect to regulation, phosphorylation on Ser-46 inhibits the phosphoryl transfer from enzyme I to HPr. General (non sugar-specific) component of the phosphoenolpyruvate-dependent sugar phosphotransferase system (sugar PTS). This major carbohydrate active-transport system catalyzes the phosphorylation of incoming sugar substrates concomitantly with their translocation across the cell membrane. The phosphoryl group from phosphoenolpyruvate (PEP) is transferred to the phosphoryl carrier protein HPr by enzyme I. Phospho-HPr then transfers it to the PTS EIIA domain. This is Phosphocarrier protein HPr (ptsH) from Xylella fastidiosa (strain Temecula1 / ATCC 700964).